The primary structure comprises 423 residues: Glycine amidinotransferase, mitochondrial (423 aa).

The N-terminal 43 residues, 1–43, are a transit peptide targeting the mitochondrion; sequence MLRVRCLRGGSRGAEALHYIGSRLGRTVTGWVQRTFQSTQAAT. 2 positions are modified to phosphoserine: Ser46 and Ser49. Residue Asp170 participates in arginine binding. Catalysis depends on residues Asp254 and His303. Arginine is bound by residues Asp305, Arg322, Ser354, and Ser355. Residue Lys385 is modified to N6-acetyllysine. Catalysis depends on Cys407, which acts as the Amidino-cysteine intermediate.

It belongs to the amidinotransferase family. Homodimer.

It is found in the mitochondrion inner membrane. The catalysed reaction is L-arginine + glycine = guanidinoacetate + L-ornithine. It catalyses the reaction 4-aminobutanoate + L-arginine = 4-guanidinobutanoate + L-ornithine. It carries out the reaction beta-alanine + L-arginine = 3-guanidinopropanoate + L-ornithine. The enzyme catalyses taurine + L-arginine = taurocyamine + L-ornithine. It participates in amine and polyamine biosynthesis; creatine biosynthesis; creatine from L-arginine and glycine: step 1/2. In terms of biological role, transamidinase that catalyzes the transfer of the amidino group of L-arginine onto the amino moiety of acceptor metabolites such as glycine, beta-alanine, gamma-aminobutyric acid (GABA) and taurine yielding the corresponding guanidine derivatives. Catalyzes the rate-limiting step of creatine biosynthesis, namely the transfer of the amidino group from L-arginine to glycine to generate guanidinoacetate, which is then methylated by GAMT to form creatine. Provides creatine as a source for ATP generation in tissues with high energy demands, in particular skeletal muscle, heart and brain. This is Glycine amidinotransferase, mitochondrial (GATM) from Bos taurus (Bovine).